The following is a 208-amino-acid chain: Protein GrpE (208 aa).

Basic and acidic residues predominate over residues 1-25 (MVDNKDFNEELKENIQEELDNETKA). A disordered region spans residues 1 to 38 (MVDNKDFNEELKENIQEELDNETKAENPNIDEEVEEVS). The segment covering 29 to 38 (NIDEEVEEVS) has biased composition (acidic residues).

This sequence belongs to the GrpE family. Homodimer.

The protein localises to the cytoplasm. In terms of biological role, participates actively in the response to hyperosmotic and heat shock by preventing the aggregation of stress-denatured proteins, in association with DnaK and GrpE. It is the nucleotide exchange factor for DnaK and may function as a thermosensor. Unfolded proteins bind initially to DnaJ; upon interaction with the DnaJ-bound protein, DnaK hydrolyzes its bound ATP, resulting in the formation of a stable complex. GrpE releases ADP from DnaK; ATP binding to DnaK triggers the release of the substrate protein, thus completing the reaction cycle. Several rounds of ATP-dependent interactions between DnaJ, DnaK and GrpE are required for fully efficient folding. The protein is Protein GrpE of Clostridium perfringens (strain 13 / Type A).